The chain runs to 597 residues: Aspartate--tRNA(Asp/Asn) ligase (597 aa).

Residue glutamate 182 participates in L-aspartate binding. Positions 206–209 (QLFK) are aspartate. Residue arginine 228 coordinates L-aspartate. Residues 228-230 (RDE) and glutamine 237 each bind ATP. An L-aspartate-binding site is contributed by histidine 455. ATP is bound at residue glutamate 489. Arginine 496 contributes to the L-aspartate binding site. 541–544 (GFDR) serves as a coordination point for ATP.

Belongs to the class-II aminoacyl-tRNA synthetase family. Type 1 subfamily. In terms of assembly, homodimer.

It is found in the cytoplasm. The catalysed reaction is tRNA(Asx) + L-aspartate + ATP = L-aspartyl-tRNA(Asx) + AMP + diphosphate. In terms of biological role, aspartyl-tRNA synthetase with relaxed tRNA specificity since it is able to aspartylate not only its cognate tRNA(Asp) but also tRNA(Asn). Reaction proceeds in two steps: L-aspartate is first activated by ATP to form Asp-AMP and then transferred to the acceptor end of tRNA(Asp/Asn). The chain is Aspartate--tRNA(Asp/Asn) ligase from Desulfosudis oleivorans (strain DSM 6200 / JCM 39069 / Hxd3) (Desulfococcus oleovorans).